A 464-amino-acid chain; its full sequence is Argininosuccinate lyase (464 aa).

It belongs to the lyase 1 family. Argininosuccinate lyase subfamily.

It is found in the cytoplasm. It carries out the reaction 2-(N(omega)-L-arginino)succinate = fumarate + L-arginine. It functions in the pathway amino-acid biosynthesis; L-arginine biosynthesis; L-arginine from L-ornithine and carbamoyl phosphate: step 3/3. The chain is Argininosuccinate lyase from Azotobacter vinelandii (strain DJ / ATCC BAA-1303).